Consider the following 81-residue polypeptide: ATP synthase subunit c, chloroplastic (81 aa).

2 helical membrane passes run Ala7–Gly27 and Leu57–Ala77.

Belongs to the ATPase C chain family. In terms of assembly, F-type ATPases have 2 components, F(1) - the catalytic core - and F(0) - the membrane proton channel. F(1) has five subunits: alpha(3), beta(3), gamma(1), delta(1), epsilon(1). F(0) has four main subunits: a(1), b(1), b'(1) and c(10-14). The alpha and beta chains form an alternating ring which encloses part of the gamma chain. F(1) is attached to F(0) by a central stalk formed by the gamma and epsilon chains, while a peripheral stalk is formed by the delta, b and b' chains.

The protein localises to the plastid. The protein resides in the chloroplast thylakoid membrane. Functionally, f(1)F(0) ATP synthase produces ATP from ADP in the presence of a proton or sodium gradient. F-type ATPases consist of two structural domains, F(1) containing the extramembraneous catalytic core and F(0) containing the membrane proton channel, linked together by a central stalk and a peripheral stalk. During catalysis, ATP synthesis in the catalytic domain of F(1) is coupled via a rotary mechanism of the central stalk subunits to proton translocation. Its function is as follows. Key component of the F(0) channel; it plays a direct role in translocation across the membrane. A homomeric c-ring of between 10-14 subunits forms the central stalk rotor element with the F(1) delta and epsilon subunits. The protein is ATP synthase subunit c, chloroplastic of Cryptomeria japonica (Japanese cedar).